We begin with the raw amino-acid sequence, 393 residues long: Probable acetyl-CoA acyltransferase (393 aa).

Cys-88 functions as the Acyl-thioester intermediate in the catalytic mechanism. Residues His-349 and Cys-378 each act as proton acceptor in the active site.

The protein belongs to the thiolase-like superfamily. Thiolase family.

Its subcellular location is the cytoplasm. The enzyme catalyses 2 acetyl-CoA = acetoacetyl-CoA + CoA. In Staphylococcus aureus (strain COL), this protein is Probable acetyl-CoA acyltransferase.